The sequence spans 198 residues: Imidazoleglycerol-phosphate dehydratase (198 aa).

Belongs to the imidazoleglycerol-phosphate dehydratase family.

Its subcellular location is the cytoplasm. It catalyses the reaction D-erythro-1-(imidazol-4-yl)glycerol 3-phosphate = 3-(imidazol-4-yl)-2-oxopropyl phosphate + H2O. Its pathway is amino-acid biosynthesis; L-histidine biosynthesis; L-histidine from 5-phospho-alpha-D-ribose 1-diphosphate: step 6/9. The chain is Imidazoleglycerol-phosphate dehydratase from Streptomyces griseus subsp. griseus (strain JCM 4626 / CBS 651.72 / NBRC 13350 / KCC S-0626 / ISP 5235).